Consider the following 474-residue polypeptide: Bifunctional protein HldE (474 aa).

The tract at residues 1-318 (MKLSMPRFDQ…RAIQREEGSE (318 aa)) is ribokinase. Residue 194–197 (NLSE) participates in ATP binding. Asp-263 is an active-site residue. Positions 343 to 474 (FTNGCFDILH…AIVEKIRGQG (132 aa)) are cytidylyltransferase.

This sequence in the N-terminal section; belongs to the carbohydrate kinase PfkB family. In the C-terminal section; belongs to the cytidylyltransferase family. In terms of assembly, homodimer.

The enzyme catalyses D-glycero-beta-D-manno-heptose 7-phosphate + ATP = D-glycero-beta-D-manno-heptose 1,7-bisphosphate + ADP + H(+). The catalysed reaction is D-glycero-beta-D-manno-heptose 1-phosphate + ATP + H(+) = ADP-D-glycero-beta-D-manno-heptose + diphosphate. Its pathway is nucleotide-sugar biosynthesis; ADP-L-glycero-beta-D-manno-heptose biosynthesis; ADP-L-glycero-beta-D-manno-heptose from D-glycero-beta-D-manno-heptose 7-phosphate: step 1/4. The protein operates within nucleotide-sugar biosynthesis; ADP-L-glycero-beta-D-manno-heptose biosynthesis; ADP-L-glycero-beta-D-manno-heptose from D-glycero-beta-D-manno-heptose 7-phosphate: step 3/4. Catalyzes the phosphorylation of D-glycero-D-manno-heptose 7-phosphate at the C-1 position to selectively form D-glycero-beta-D-manno-heptose-1,7-bisphosphate. Its function is as follows. Catalyzes the ADP transfer from ATP to D-glycero-beta-D-manno-heptose 1-phosphate, yielding ADP-D-glycero-beta-D-manno-heptose. The sequence is that of Bifunctional protein HldE from Pseudomonas savastanoi pv. phaseolicola (strain 1448A / Race 6) (Pseudomonas syringae pv. phaseolicola (strain 1448A / Race 6)).